The primary structure comprises 306 residues: Serine/threonine-protein phosphatase PP2A-1 catalytic subunit (306 aa).

The Mn(2+) site is built by Asp54, His56, Asp82, and Asn114. His115 serves as the catalytic Proton donor. Positions 164 and 238 each coordinate Mn(2+).

It belongs to the PPP phosphatase family. PP-2A subfamily. The cofactor is Mn(2+).

The protein resides in the cytoplasm. It catalyses the reaction O-phospho-L-seryl-[protein] + H2O = L-seryl-[protein] + phosphate. It carries out the reaction O-phospho-L-threonyl-[protein] + H2O = L-threonyl-[protein] + phosphate. This Oryza sativa subsp. indica (Rice) protein is Serine/threonine-protein phosphatase PP2A-1 catalytic subunit (PP2A1).